The chain runs to 803 residues: MDFPQHSQHVLEQLNQQRQLGLLCDCTFVVDGVHFKAHKAVLAACSEYFKMLFVDQKDVVHLDISNAAGLGQVLEFMYTAKLSLSPENVDDVLAVATFLQMQDIITACHALKSLAEPATSPGGNAEALATEGGDKRAKEEKVATSTLSRLEQAGRSTPIGPSRDLKEERGGQAQSAASGAEQTEKADAPREPPPVELKPDPTSGMAAAEAEAALSESSEQEMEVEPARKGEEEQKEQEEQEEEGAGPAEVKEEGSQLENGEAPEENENEESAGTDSGQELGSEARGLRSGTYGDRTESKAYGSVIHKCEDCGKEFTHTGNFKRHIRIHTGEKPFSCRECSKAFSDPAACKAHEKTHSPLKPYGCEECGKSYRLISLLNLHKKRHSGEARYRCEDCGKLFTTSGNLKRHQLVHSGEKPYQCDYCGRSFSDPTSKMRHLETHDTDKEHKCPHCDKKFNQVGNLKAHLKIHIADGPLKCRECGKQFTTSGNLKRHLRIHSGEKPYVCIHCQRQFADPGALQRHVRIHTGEKPCQCVMCGKAFTQASSLIAHVRQHTGEKPYVCERCGKRFVQSSQLANHIRHHDNIRPHKCSVCSKAFVNVGDLSKHIIIHTGEKPYLCDKCGRGFNRVDNLRSHVKTVHQGKAGIKILEPEEGSEVSVVTVDDMVTLATEALAATAVTQLTVVPVGAAVTADETEVLKAEISKAVKQVQEEDPNTHILYACDSCGDKFLDANSLAQHVRIHTAQALVMFQTDADFYQQYGPGGTWPAGQVLQAGELVFRPRDGAEGQPALAETSPTAPECPPPAE.

Positions 1-104 (MDFPQHSQHV…VATFLQMQDI (104 aa)) constitute a BTB domain. The disordered stretch occupies residues 116–295 (EPATSPGGNA…GLRSGTYGDR (180 aa)). Ser120 is modified (phosphoserine). Positions 132–142 (GGDKRAKEEKV) are enriched in basic and acidic residues. Low complexity-rich tracts occupy residues 171–180 (GQAQSAASGA) and 206–217 (AAAEAEAALSES). Acidic residues-rich tracts occupy residues 233–244 (EQKEQEEQEEEG) and 261–272 (EAPEENENEESA). The interaction with MYC stretch occupies residues 269–308 (EESAGTDSGQELGSEARGLRSGTYGDRTESKAYGSVIHKC). 13 consecutive C2H2-type zinc fingers follow at residues 306–328 (HKCE…IRIH), 334–356 (FSCR…EKTH), 362–384 (YGCE…KKRH), 390–412 (YRCE…QLVH), 418–440 (YQCD…LETH), 446–468 (HKCP…LKIH), 474–496 (LKCR…LRIH), 502–524 (YVCI…VRIH), 530–552 (CQCV…VRQH), 558–580 (YVCE…IRHH), 586–608 (HKCS…IIIH), 614–637 (YLCD…KTVH), and 717–739 (YACD…VRIH). A Glycyl lysine isopeptide (Lys-Gly) (interchain with G-Cter in ubiquitin) cross-link involves residue Lys397. Residue Lys481 forms a Glycyl lysine isopeptide (Lys-Gly) (interchain with G-Cter in ubiquitin) linkage. Positions 637-718 (HQGKAGIKIL…EDPNTHILYA (82 aa)) are interaction with MYC. The tract at residues 637 to 803 (HQGKAGIKIL…TAPECPPPAE (167 aa)) is interaction with HCFC1. Residues 779 to 803 (RDGAEGQPALAETSPTAPECPPPAE) are disordered.

It belongs to the krueppel C2H2-type zinc-finger protein family. Homooligomerizes (via the BTB/POZ domain), multimerization is required for DNA binding. Interacts (via the C-terminal zinc fingers) with GIF1; the interaction results in the recruitment of MYB to the CDKN1A/p21 and CDKN1B promoters and repression of transcription. Interacts with TRAF2, interfering with the binding of UBC13 to TRAF2, and inhibiting TRAF2 E3 ligase activity. Interacts with MYC (via the C-terminal helix-loop-helix motif); the interaction inhibits ZBTB17 transactivation and growth arrest activities and renders it insoluble in the nucleus. Also interacts with HCFC1, MAGEA4 and TMPRSS11A. Interacts with BCL6; the interaction inhibits ZBTB17 transactivation activity on target genes involved in cell cycle arrest. Interacts with ZBTB49 isoform 3/ZNF509S1; this interaction blocks ZBTB17-mediated repression of RB1. In terms of processing, undergoes 'Lys-48'-linked polyubiquitination at Lys-397 and Lys-481 and subsequent proteasomal degradation in a TRAF2-dependent manner. In terms of tissue distribution, expressed in germinal center B-cells.

The protein resides in the nucleus. In terms of biological role, transcription factor that can function as an activator or repressor depending on its binding partners, and by targeting negative regulators of cell cycle progression. Plays a critical role in early lymphocyte development, where it is essential to prevent apoptosis in lymphoid precursors, allowing them to survive in response to IL7 and undergo proper lineage commitment. Has been shown to bind to the promoters of adenovirus major late protein and cyclin D1 and activate transcription. Required for early embryonic development during gastrulation. Represses RB1 transcription; this repression can be blocked by interaction with ZBTB49 isoform 3/ZNF509S1. This chain is Zinc finger and BTB domain-containing protein 17 (ZBTB17), found in Homo sapiens (Human).